Reading from the N-terminus, the 302-residue chain is Glycine--tRNA ligase alpha subunit (302 aa).

It belongs to the class-II aminoacyl-tRNA synthetase family. Tetramer of two alpha and two beta subunits.

It is found in the cytoplasm. The enzyme catalyses tRNA(Gly) + glycine + ATP = glycyl-tRNA(Gly) + AMP + diphosphate. This Xanthomonas oryzae pv. oryzae (strain PXO99A) protein is Glycine--tRNA ligase alpha subunit.